Here is a 429-residue protein sequence, read N- to C-terminus: Adenylosuccinate synthetase (429 aa).

GTP contacts are provided by residues 13–19 (GDEGKGK) and 41–43 (GHT). D14 (proton acceptor) is an active-site residue. Residues D14 and G41 each contribute to the Mg(2+) site. IMP-binding positions include 14-17 (DEGK), 39-42 (NAGH), T130, R144, Q225, T240, and R304. The active-site Proton donor is H42. Residue 300–306 (ATTGRAR) participates in substrate binding. GTP is bound by residues R306, 332-334 (KLD), and 413-415 (STG).

Belongs to the adenylosuccinate synthetase family. Homodimer. Mg(2+) is required as a cofactor.

It localises to the cytoplasm. The catalysed reaction is IMP + L-aspartate + GTP = N(6)-(1,2-dicarboxyethyl)-AMP + GDP + phosphate + 2 H(+). It participates in purine metabolism; AMP biosynthesis via de novo pathway; AMP from IMP: step 1/2. Functionally, plays an important role in the de novo pathway of purine nucleotide biosynthesis. Catalyzes the first committed step in the biosynthesis of AMP from IMP. In Pseudomonas fluorescens (strain Pf0-1), this protein is Adenylosuccinate synthetase.